A 288-amino-acid chain; its full sequence is Homoserine kinase (288 aa).

78–88 (PLARGLGSSSS) provides a ligand contact to ATP.

The protein belongs to the GHMP kinase family. Homoserine kinase subfamily.

It localises to the cytoplasm. It catalyses the reaction L-homoserine + ATP = O-phospho-L-homoserine + ADP + H(+). Its pathway is amino-acid biosynthesis; L-threonine biosynthesis; L-threonine from L-aspartate: step 4/5. In terms of biological role, catalyzes the ATP-dependent phosphorylation of L-homoserine to L-homoserine phosphate. This chain is Homoserine kinase, found in Streptococcus mutans serotype c (strain ATCC 700610 / UA159).